The following is a 962-amino-acid chain: Protease 3 (962 aa).

Residues 1–23 (MPRSTWFKALLLFVALWAPLSQA) form the signal peptide. Residue H88 participates in Zn(2+) binding. E91 (proton acceptor) is an active-site residue. 2 residues coordinate Zn(2+): H92 and E169.

It belongs to the peptidase M16 family. Monomer. Zn(2+) serves as cofactor.

The protein localises to the periplasm. It catalyses the reaction Preferential cleavage of 16-Tyr-|-Leu-17 and 25-Phe-|-Tyr-26 bonds of oxidized insulin B chain. Also acts on other substrates of Mw less than 7 kDa such as insulin and glucagon.. In terms of biological role, endopeptidase that degrades small peptides of less than 7 kDa, such as glucagon and insulin. In Shigella flexneri, this protein is Protease 3 (ptrA).